A 96-amino-acid chain; its full sequence is Phosphoribosyl-ATP pyrophosphatase (96 aa).

The protein belongs to the PRA-PH family.

The protein resides in the cytoplasm. It carries out the reaction 1-(5-phospho-beta-D-ribosyl)-ATP + H2O = 1-(5-phospho-beta-D-ribosyl)-5'-AMP + diphosphate + H(+). The protein operates within amino-acid biosynthesis; L-histidine biosynthesis; L-histidine from 5-phospho-alpha-D-ribose 1-diphosphate: step 2/9. The polypeptide is Phosphoribosyl-ATP pyrophosphatase (Methanococcus vannielii (strain ATCC 35089 / DSM 1224 / JCM 13029 / OCM 148 / SB)).